A 192-amino-acid chain; its full sequence is Probable Brix domain-containing ribosomal biogenesis protein (192 aa).

In terms of domain architecture, Brix spans 2–191; sequence RPAAITTSQR…DFRTKDERMK (190 aa).

Probably involved in the biogenesis of the ribosome. In Methanopyrus kandleri (strain AV19 / DSM 6324 / JCM 9639 / NBRC 100938), this protein is Probable Brix domain-containing ribosomal biogenesis protein.